A 378-amino-acid polypeptide reads, in one-letter code: Sterol 24-C-methyltransferase erg6 (378 aa).

The protein belongs to the class I-like SAM-binding methyltransferase superfamily. Erg6/SMT family.

It is found in the nucleus. The protein resides in the endoplasmic reticulum. It carries out the reaction zymosterol + S-adenosyl-L-methionine = fecosterol + S-adenosyl-L-homocysteine + H(+). It catalyses the reaction lanosterol + S-adenosyl-L-methionine = eburicol + S-adenosyl-L-homocysteine + H(+). It functions in the pathway steroid metabolism; ergosterol biosynthesis. In terms of biological role, sterol 24-C-methyltransferase; part of the third module of ergosterol biosynthesis pathway that includes by the late steps of the pathway. Erg6 catalyzes the methyl transfer from S-adenosyl-methionine to the C-24 of zymosterol to form fecosterol. The third module or late pathway involves the ergosterol synthesis itself through consecutive reactions that mainly occur in the endoplasmic reticulum (ER) membrane. Firstly, the squalene synthase erg9 catalyzes the condensation of 2 farnesyl pyrophosphate moieties to form squalene, which is the precursor of all steroids. Secondly, squalene is converted into lanosterol by the consecutive action of the squalene epoxidase erg1 and the lanosterol synthase erg7. The lanosterol 14-alpha-demethylase erg11/cyp1 catalyzes C14-demethylation of lanosterol to produce 4,4'-dimethyl cholesta-8,14,24-triene-3-beta-ol. In the next steps, a complex process involving various demethylation, reduction and desaturation reactions catalyzed by the C-14 reductase erg24 and the C-4 demethylation complex erg25-erg26-erg27 leads to the production of zymosterol. Erg28 likely functions in the C-4 demethylation complex reaction by tethering erg26 and Erg27 to the endoplasmic reticulum or to facilitate interaction between these proteins. Then, the sterol 24-C-methyltransferase erg6 catalyzes the methyl transfer from S-adenosyl-methionine to the C-24 of zymosterol to form fecosterol. The C-8 sterol isomerase erg2 catalyzes the reaction which results in unsaturation at C-7 in the B ring of sterols and thus converts fecosterol to episterol. The sterol-C5-desaturases erg31 and erg32 then catalyze the introduction of a C-5 double bond in the B ring to produce 5-dehydroepisterol. The C-22 sterol desaturase erg5 further converts 5-dehydroepisterol into ergosta-5,7,22,24(28)-tetraen-3beta-ol by forming the C-22(23) double bond in the sterol side chain. Finally, ergosta-5,7,22,24(28)-tetraen-3beta-ol is substrate of the C-24(28) sterol reductase erg4 to produce ergosterol. In the genus Schizosaccharomyces, a second route exists between lanosterol and fecosterol, via the methylation of lanosterol to eburicol by erg6, followed by C14-demethylation by erg11/cyp1 and C4-demethylation by the demethylation complex erg25-erg26-erg27. This Schizosaccharomyces pombe (strain 972 / ATCC 24843) (Fission yeast) protein is Sterol 24-C-methyltransferase erg6.